Consider the following 391-residue polypeptide: MSRFLICSFALVLLYPAGIDMYLVGLPRIAADLNASEAQLHIAFSVYLAGMAAAMLFAGKVADRSGRKPVAIPGAALFIIASVFCSLAETSTLFLAGRFLQGLGAGCCYVVAFAILRDTLDDRRRAKVLSLLNGITCIIPVLAPVLGHLIMLKFPWQSLFWTMAIMGIAVLMLSLFILKETRPAAPAASDKSRENSESLLNRFFLSRVVITTLSVSVILTFVNTSPVLLMEIMGFERGEYATIMALTAGVSMTVSFSTPFALGIFKPRTLMITSQVLFLAAGITLAVSPSHAISLFGITLICAGFSVGFGVAMSQALGPFSLRAGVASSTLGIAQVCGSSLWIWLAAVVGIGAWNMLIGILIACSIVSLLLIMFVAPGRPVAAHEEIHHHA.

Over 1 to 3 the chain is Cytoplasmic; that stretch reads MSR. Residues 4–24 form a helical membrane-spanning segment; the sequence is FLICSFALVLLYPAGIDMYLV. Residues 25–41 are Periplasmic-facing; sequence GLPRIAADLNASEAQLH. Residues 42-62 traverse the membrane as a helical segment; that stretch reads IAFSVYLAGMAAAMLFAGKVA. Over 63-68 the chain is Cytoplasmic; that stretch reads DRSGRK. The helical transmembrane segment at 69–89 threads the bilayer; that stretch reads PVAIPGAALFIIASVFCSLAE. Residues 90–92 lie on the Periplasmic side of the membrane; the sequence is TST. The helical transmembrane segment at 93 to 113 threads the bilayer; it reads LFLAGRFLQGLGAGCCYVVAF. Topologically, residues 114–130 are cytoplasmic; that stretch reads AILRDTLDDRRRAKVLS. Residues 131–151 traverse the membrane as a helical segment; sequence LLNGITCIIPVLAPVLGHLIM. Residues 152 to 157 are Periplasmic-facing; it reads LKFPWQ. A helical membrane pass occupies residues 158–178; that stretch reads SLFWTMAIMGIAVLMLSLFIL. Topologically, residues 179 to 198 are cytoplasmic; that stretch reads KETRPAAPAASDKSRENSES. A helical membrane pass occupies residues 199–221; sequence LLNRFFLSRVVITTLSVSVILTF. Topologically, residues 222–244 are periplasmic; sequence VNTSPVLLMEIMGFERGEYATIM. Residues 245–265 form a helical membrane-spanning segment; the sequence is ALTAGVSMTVSFSTPFALGIF. At 266-268 the chain is on the cytoplasmic side; sequence KPR. Residues 269-289 traverse the membrane as a helical segment; that stretch reads TLMITSQVLFLAAGITLAVSP. The Periplasmic segment spans residues 290–292; that stretch reads SHA. Residues 293–313 form a helical membrane-spanning segment; the sequence is ISLFGITLICAGFSVGFGVAM. The Cytoplasmic segment spans residues 314 to 330; that stretch reads SQALGPFSLRAGVASST. Residues 331-351 traverse the membrane as a helical segment; the sequence is LGIAQVCGSSLWIWLAAVVGI. Residues 352 to 355 are Periplasmic-facing; it reads GAWN. A helical transmembrane segment spans residues 356–376; that stretch reads MLIGILIACSIVSLLLIMFVA. Over 377 to 391 the chain is Cytoplasmic; it reads PGRPVAAHEEIHHHA.

The protein belongs to the major facilitator superfamily. DHA1 family. MdtL (TC 2.A.1.2.22) subfamily.

The protein resides in the cell inner membrane. In Shigella dysenteriae serotype 1 (strain Sd197), this protein is Multidrug resistance protein MdtL.